Consider the following 353-residue polypeptide: Protein RecA (353 aa).

ATP is bound at residue 73-80 (GPESSGKT).

Belongs to the RecA family.

It localises to the cytoplasm. Functionally, can catalyze the hydrolysis of ATP in the presence of single-stranded DNA, the ATP-dependent uptake of single-stranded DNA by duplex DNA, and the ATP-dependent hybridization of homologous single-stranded DNAs. It interacts with LexA causing its activation and leading to its autocatalytic cleavage. In Bordetella avium (strain 197N), this protein is Protein RecA.